Consider the following 106-residue polypeptide: Small ribosomal subunit protein bS18 (106 aa).

The interval 1–32 (MRWMKIMSEDMKQEQSGEGRGGRGGPARPLAS) is disordered. Positions 7-21 (MSEDMKQEQSGEGRG) are enriched in basic and acidic residues.

The protein belongs to the bacterial ribosomal protein bS18 family. As to quaternary structure, part of the 30S ribosomal subunit. Forms a tight heterodimer with protein bS6.

In terms of biological role, binds as a heterodimer with protein bS6 to the central domain of the 16S rRNA, where it helps stabilize the platform of the 30S subunit. The chain is Small ribosomal subunit protein bS18 from Magnetococcus marinus (strain ATCC BAA-1437 / JCM 17883 / MC-1).